A 340-amino-acid chain; its full sequence is Delta(1)-pyrroline-2-carboxylate reductase 1 (340 aa).

Serine 50 acts as the Charge relay system in catalysis. Histidine 51 (proton donor) is an active-site residue. Arginine 55 is a substrate binding site. NADP(+) is bound at residue 123 to 127 (HFSAL). Threonine 163 contributes to the substrate binding site. 181-183 (DFA) contacts NADP(+). Residue 189–190 (RG) coordinates substrate. The active-site Charge relay system is the aspartate 191. NADP(+) is bound by residues 232–233 (HK) and 307–313 (RLPSQRR).

Belongs to the LDH2/MDH2 oxidoreductase family. In terms of assembly, homodimer.

The enzyme catalyses L-proline + NAD(+) = 1-pyrroline-2-carboxylate + NADH + H(+). It carries out the reaction L-proline + NADP(+) = 1-pyrroline-2-carboxylate + NADPH + H(+). Catalyzes the reduction of Delta(1)-pyrroline-2-carboxylate (Pyr2C) to L-proline, using NADPH as the electron donor. May be involved in a degradation pathway that converts trans-3-hydroxy-L-proline (t3LHyp) to L-proline. The chain is Delta(1)-pyrroline-2-carboxylate reductase 1 from Burkholderia ambifaria (strain ATCC BAA-244 / DSM 16087 / CCUG 44356 / LMG 19182 / AMMD) (Burkholderia cepacia (strain AMMD)).